Consider the following 730-residue polypeptide: LisH domain-containing protein ARMC9 (730 aa).

The LisH domain occupies 7–39 (HESELLGLVKEYLDFAEFEDTLKTFSKECKVKG). Positions 205–242 (SNNKEMLQQLHQQLLEAERRAMAYLKRYNKMQADYHSL) form a coiled coil. Serine 583 bears the Phosphoserine mark. The interval 675-730 (QNAQQARNGCPRPIPVAQPDDYKEGKRGVAGRATPSSCKSAECAEPVLSSGAQKPK) is disordered.

Interacts with TOGARAM1, CCDC66, CEP104, CSPP1 and CEP290. Interacts with NDUFAF2.

It is found in the cytoplasm. Its subcellular location is the cytoskeleton. It localises to the cilium basal body. The protein localises to the cell projection. The protein resides in the cilium. It is found in the microtubule organizing center. Its subcellular location is the centrosome. It localises to the centriole. In terms of biological role, involved in ciliogenesis. It is required for appropriate acetylation and polyglutamylation of ciliary microtubules, and regulation of cilium length. Acts as a positive regulator of hedgehog (Hh)signaling. May participate in the trafficking and/or retention of GLI2 and GLI3 proteins at the ciliary tip. The polypeptide is LisH domain-containing protein ARMC9 (Armc9) (Rattus norvegicus (Rat)).